The primary structure comprises 160 residues: Secreted RxLR effector protein 83 (160 aa).

Positions 1–21 are cleaved as a signal peptide; that stretch reads MLVLLAATFFIYISRLTSTDA. The RxLR signature appears at 27–30; that stretch reads RGLR. 2 N-linked (GlcNAc...) asparagine glycosylation sites follow: asparagine 39 and asparagine 131.

The protein belongs to the RxLR effector family.

The protein localises to the secreted. The protein resides in the host nucleus. Its subcellular location is the host cytoplasm. Its function is as follows. Secreted effector that completely suppresses the host cell death induced by cell death-inducing proteins. This Plasmopara viticola (Downy mildew of grapevine) protein is Secreted RxLR effector protein 83.